The sequence spans 155 residues: MGLQGQLSDVSSDSIPLMLLSLLAVFINHLRSFLLRLTSKSNPNLPVDDVSIASGLANIIVLADQLSLNRLFSYRCGDGGGGGSDCVVCLSKLKEGEEVRKLECRHVFHKKCLEGWLHQFNFTCPLCRSALVSDDCVSKTQRSVGRDLISCFSLH.

Residues 86-128 (CVVCLSKLKEGEEVRKLECRHVFHKKCLEGWLHQFNFTCPLCR) form an RING-type; atypical zinc finger.

As to quaternary structure, interacts with NAC019 and NAC055. In terms of tissue distribution, expressed in stems, flowers, cauline leaves, rosettes, siliques, seeds and roots.

The protein resides in the cytoplasm. Its subcellular location is the nucleus. It carries out the reaction S-ubiquitinyl-[E2 ubiquitin-conjugating enzyme]-L-cysteine + [acceptor protein]-L-lysine = [E2 ubiquitin-conjugating enzyme]-L-cysteine + N(6)-ubiquitinyl-[acceptor protein]-L-lysine.. Its pathway is protein modification; protein ubiquitination. Functionally, E3 ubiquitin-protein ligase involved in the positive regulation of abscisic acid (ABA) signaling and responses to salt and osmotic stresses during seed germination and early seedling development. Acts additively with RHA2B in regulating ABA signaling and drought response. Possesses E3 ubiquitin ligase activity in vitro. The protein is E3 ubiquitin-protein ligase RHA2A of Arabidopsis thaliana (Mouse-ear cress).